We begin with the raw amino-acid sequence, 837 residues long: GRIP1-associated protein 1 (837 aa).

The residue at position 2 (A2) is an N-acetylalanine. Residues 4 to 158 adopt a coiled-coil conformation; sequence ALSEEEFQRM…ALQERYGKEA (155 aa). 4 disordered regions span residues 161–180, 555–577, 647–666, and 677–702; these read PSAV…PISL, KGKE…ERDG, SEMN…VSSF, and SSAI…LSDE. A coiled-coil region spans residues 204–637; sequence EQLQGLESSK…LQEILTNSKS (434 aa). The span at 648 to 666 shows a compositional bias: polar residues; the sequence is EMNSPSRTQTGDSSSVSSF. A phosphoserine mark is found at S651, S662, S664, S665, S684, S686, S687, and S688. The span at 678-690 shows a compositional bias: low complexity; the sequence is SAIPARSLSSSPQ. Coiled coils occupy residues 697 to 731 and 781 to 810; these read AELS…LEVS and DENL…KDME. The residue at position 826 (S826) is a Phosphoserine.

In terms of assembly, interacts with GRIP1, GRIP2 and AMPA receptors. Interacts (via C-terminus) with MAPK8/JNK1 and with MAP3K1/MEKK1; the interaction promotes MAP3K1-mediated phosphorylation of MAPK8. Interacts (via N-terminus) with RAB4A (in GTP-bound form). Interacts (via C-terminus) with STX12. In terms of processing, proteolytically cleaved by caspase-3. A minor C-terminal proteolytic fragment of 30 kDa is produced. Proteolytic cleavage is required for JNK signaling activation. As to expression, expressed in the central nervous system; especially in neurons.

Its subcellular location is the early endosome membrane. The protein localises to the recycling endosome membrane. The protein resides in the cell projection. It localises to the axon. It is found in the dendrite. Its subcellular location is the synapse. Functionally, regulates the endosomal recycling back to the neuronal plasma membrane, possibly by connecting early and late recycling endosomal domains and promoting segregation of recycling endosomes from early endosomal membranes. Involved in the localization of recycling endosomes to dendritic spines, thereby playing a role in the maintenance of dendritic spine morphology. Required for the activity-induced AMPA receptor recycling to dendrite membranes and for long-term potentiation and synaptic plasticity. In terms of biological role, functions as a scaffold protein in neurons to facilitate MAP3K1/MEKK1-mediated activation of the JNK1 kinase by phosphorylation, possibly by bringing MAP3K1/MEKK1 and JNK1 in close proximity. The polypeptide is GRIP1-associated protein 1 (Gripap1) (Rattus norvegicus (Rat)).